The primary structure comprises 519 residues: Dihydropyrimidinase (519 aa).

Zn(2+)-binding residues include H67 and H69. S79 carries the post-translational modification Phosphoserine. A Zn(2+)-binding site is contributed by K159. At K159 the chain carries N6-carboxylysine. Y164 contributes to the substrate binding site. Zn(2+)-binding residues include H192 and H248. K256 carries the N6-succinyllysine modification. D326 serves as a coordination point for Zn(2+). N347 is a binding site for substrate. T510 is modified (phosphothreonine).

The protein belongs to the metallo-dependent hydrolases superfamily. Hydantoinase/dihydropyrimidinase family. As to quaternary structure, homotetramer. It depends on Zn(2+) as a cofactor. In terms of processing, carboxylation allows a single lysine to coordinate two zinc ions.

It carries out the reaction 5,6-dihydrouracil + H2O = 3-(carbamoylamino)propanoate + H(+). Functionally, catalyzes the second step of the reductive pyrimidine degradation, the reversible hydrolytic ring opening of dihydropyrimidines. Can catalyze the ring opening of 5,6-dihydrouracil to N-carbamyl-alanine and of 5,6-dihydrothymine to N-carbamyl-amino isobutyrate. This chain is Dihydropyrimidinase (Dpys), found in Rattus norvegicus (Rat).